Consider the following 443-residue polypeptide: Maintenance of mitochondrial morphology protein 1 (443 aa).

The Lumenal segment spans residues 1–80; sequence MADLETSDLS…PSNTWSFTQG (80 aa). The helical transmembrane segment at 81-101 threads the bilayer; it reads LIVGQLSVVFVIVIFIKFFVF. The Cytoplasmic segment spans residues 102–443; the sequence is AESSPALAKS…NGDKVEDGSN (342 aa). Disordered regions lie at residues 126–146 and 304–358; these read KKDQ…TTAS and LSAH…NDGT. Over residues 131–142 the composition is skewed to acidic residues; it reads SSDDADPDDDSE. One can recognise an SMP-LTD domain in the interval 165 to 417; it reads SPESLDWFNV…EPRFQVVRLP (253 aa).

It belongs to the MMM1 family. Homodimer. Component of the ER-mitochondria encounter structure (ERMES) or MDM complex, composed of MMM1, MDM10, MDM12 and MDM34. An MMM1 homodimer associates with one molecule of MDM12 on each side in a pairwise head-to-tail manner, and the SMP-LTD domains of MMM1 and MDM12 generate a continuous hydrophobic tunnel for phospholipid trafficking.

Its subcellular location is the endoplasmic reticulum membrane. Its function is as follows. Component of the ERMES/MDM complex, which serves as a molecular tether to connect the endoplasmic reticulum (ER) and mitochondria. Components of this complex are involved in the control of mitochondrial shape and protein biogenesis, and function in nonvesicular lipid trafficking between the ER and mitochondria. The MDM12-MMM1 subcomplex functions in the major beta-barrel assembly pathway that is responsible for biogenesis of all outer membrane beta-barrel proteins, and acts in a late step after the SAM complex. The MDM10-MDM12-MMM1 subcomplex further acts in the TOM40-specific pathway after the action of the MDM12-MMM1 complex. Essential for establishing and maintaining the structure of mitochondria and maintenance of mtDNA nucleoids. This is Maintenance of mitochondrial morphology protein 1 from Scheffersomyces stipitis (strain ATCC 58785 / CBS 6054 / NBRC 10063 / NRRL Y-11545) (Yeast).